Here is a 384-residue protein sequence, read N- to C-terminus: Dual-specificity RNA methyltransferase RlmN (384 aa).

The Proton acceptor role is filled by Glu-105. The region spanning 111 to 350 is the Radical SAM core domain; sequence EDDRATLCVS…TIVRKTRGDD (240 aa). The cysteines at positions 118 and 355 are disulfide-linked. Cys-125, Cys-129, and Cys-132 together coordinate [4Fe-4S] cluster. Residues 179 to 180, Ser-211, 233 to 235, and Asn-312 contribute to the S-adenosyl-L-methionine site; these read GE and SLH. The S-methylcysteine intermediate role is filled by Cys-355.

Belongs to the radical SAM superfamily. RlmN family. The cofactor is [4Fe-4S] cluster.

Its subcellular location is the cytoplasm. It catalyses the reaction adenosine(2503) in 23S rRNA + 2 reduced [2Fe-2S]-[ferredoxin] + 2 S-adenosyl-L-methionine = 2-methyladenosine(2503) in 23S rRNA + 5'-deoxyadenosine + L-methionine + 2 oxidized [2Fe-2S]-[ferredoxin] + S-adenosyl-L-homocysteine. The catalysed reaction is adenosine(37) in tRNA + 2 reduced [2Fe-2S]-[ferredoxin] + 2 S-adenosyl-L-methionine = 2-methyladenosine(37) in tRNA + 5'-deoxyadenosine + L-methionine + 2 oxidized [2Fe-2S]-[ferredoxin] + S-adenosyl-L-homocysteine. In terms of biological role, specifically methylates position 2 of adenine 2503 in 23S rRNA and position 2 of adenine 37 in tRNAs. m2A2503 modification seems to play a crucial role in the proofreading step occurring at the peptidyl transferase center and thus would serve to optimize ribosomal fidelity. This is Dual-specificity RNA methyltransferase RlmN from Escherichia fergusonii (strain ATCC 35469 / DSM 13698 / CCUG 18766 / IAM 14443 / JCM 21226 / LMG 7866 / NBRC 102419 / NCTC 12128 / CDC 0568-73).